The following is a 359-amino-acid chain: UPF0283 membrane protein Rleg2_1967 (359 aa).

A disordered region spans residues 1–43 (MSKPPSDPPRRPPAAFTYEDEATERHDNGRQAERRRKPESFSE). A compositionally biased stretch (basic and acidic residues) spans 23-40 (TERHDNGRQAERRRKPES). The next 2 helical transmembrane spans lie at 77 to 97 (FGKI…GLWT) and 111 to 131 (LGYL…ALVI).

This sequence belongs to the UPF0283 family.

It is found in the cell inner membrane. The chain is UPF0283 membrane protein Rleg2_1967 from Rhizobium leguminosarum bv. trifolii (strain WSM2304).